A 179-amino-acid polypeptide reads, in one-letter code: Large ribosomal subunit protein uL5 (179 aa).

Belongs to the universal ribosomal protein uL5 family. In terms of assembly, part of the 50S ribosomal subunit; part of the 5S rRNA/L5/L18/L25 subcomplex. Contacts the 5S rRNA and the P site tRNA. Forms a bridge to the 30S subunit in the 70S ribosome.

In terms of biological role, this is one of the proteins that bind and probably mediate the attachment of the 5S RNA into the large ribosomal subunit, where it forms part of the central protuberance. In the 70S ribosome it contacts protein S13 of the 30S subunit (bridge B1b), connecting the 2 subunits; this bridge is implicated in subunit movement. Contacts the P site tRNA; the 5S rRNA and some of its associated proteins might help stabilize positioning of ribosome-bound tRNAs. In Prochlorococcus marinus (strain AS9601), this protein is Large ribosomal subunit protein uL5.